Here is a 555-residue protein sequence, read N- to C-terminus: Energy-dependent translational throttle protein EttA (555 aa).

ABC transporter domains lie at 6–259 and 324–550; these read YTMH…AQEA and LEVS…RIKY. Residue 39 to 46 participates in ATP binding; that stretch reads GLNGAGKS. Residues 95–139 are arm; it reads SEVVNALKRLDEVYALYADPDADFDKLAAEQGRLEEIIQAHDGHN. A ptIM region spans residues 242-322; sequence GNYSSWLEQK…IPPGPRLGDK (81 aa). 356 to 363 is a binding site for ATP; it reads GPNGAGKS.

This sequence belongs to the ABC transporter superfamily. ABCF family. Translational throttle EttA subfamily. As to quaternary structure, monomer. Probably contacts ribosomal proteins L1, L5, L33 and S7, the 16S and 23S rRNA and the P-site containing tRNA(fMet).

The protein resides in the cytoplasm. The enzyme catalyses ATP + H2O = ADP + phosphate + H(+). Its function is as follows. A translation factor that gates the progression of the 70S ribosomal initiation complex (IC, containing tRNA(fMet) in the P-site) into the translation elongation cycle by using a mechanism sensitive to the ATP/ADP ratio. Binds to the 70S ribosome E-site where it modulates the state of the translating ribosome during subunit translocation. ATP hydrolysis probably frees it from the ribosome, which can enter the elongation phase. In Escherichia coli O6:H1 (strain CFT073 / ATCC 700928 / UPEC), this protein is Energy-dependent translational throttle protein EttA.